The sequence spans 179 residues: Large ribosomal subunit protein eL18 (179 aa).

It belongs to the eukaryotic ribosomal protein eL18 family. As to quaternary structure, component of the large ribosomal subunit.

It localises to the cytoplasm. Its subcellular location is the cytosol. It is found in the rough endoplasmic reticulum. Its function is as follows. Component of the large ribosomal subunit. The ribosome is a large ribonucleoprotein complex responsible for the synthesis of proteins in the cell. The polypeptide is Large ribosomal subunit protein eL18 (rpl18) (Salmo salar (Atlantic salmon)).